The sequence spans 324 residues: tRNA N6-adenosine threonylcarbamoyltransferase (324 aa).

Residues histidine 107, histidine 111, and tyrosine 127 each coordinate Fe cation. Residues tyrosine 127 to glycine 131, aspartate 159, glycine 172, glutamate 176, and asparagine 257 each bind substrate. Aspartate 285 provides a ligand contact to Fe cation.

It belongs to the KAE1 / TsaD family. Monomer. Component of the KEOPS complex that consists of Kae1, Bud32, Cgi121 and Pcc1; the whole complex dimerizes. Fe(2+) serves as cofactor.

The protein localises to the cytoplasm. It catalyses the reaction L-threonylcarbamoyladenylate + adenosine(37) in tRNA = N(6)-L-threonylcarbamoyladenosine(37) in tRNA + AMP + H(+). In terms of biological role, required for the formation of a threonylcarbamoyl group on adenosine at position 37 (t(6)A37) in tRNAs that read codons beginning with adenine. Is a component of the KEOPS complex that is probably involved in the transfer of the threonylcarbamoyl moiety of threonylcarbamoyl-AMP (TC-AMP) to the N6 group of A37. Kae1 likely plays a direct catalytic role in this reaction, but requires other protein(s) of the complex to fulfill this activity. In vitro, binds tRNA, ssRNA, both single- and double-stranded DNA, and exhibits a low ATPase activity. This chain is tRNA N6-adenosine threonylcarbamoyltransferase, found in Pyrococcus abyssi (strain GE5 / Orsay).